Consider the following 396-residue polypeptide: Elongation factor Tu (396 aa).

Residues 10 to 205 (KPHVNIGTIG…ACDDNIPDPV (196 aa)) form the tr-type G domain. Residues 19 to 26 (GHVDHGKT) form a G1 region. 19–26 (GHVDHGKT) is a GTP binding site. Thr26 serves as a coordination point for Mg(2+). Positions 62-66 (GITIN) are G2. Positions 83–86 (DAPG) are G3. GTP is bound by residues 83–87 (DAPGH) and 138–141 (NKCD). Residues 138–141 (NKCD) form a G4 region. Residues 175-177 (SAL) form a G5 region.

This sequence belongs to the TRAFAC class translation factor GTPase superfamily. Classic translation factor GTPase family. EF-Tu/EF-1A subfamily. In terms of assembly, monomer.

Its subcellular location is the cytoplasm. The catalysed reaction is GTP + H2O = GDP + phosphate + H(+). Its function is as follows. GTP hydrolase that promotes the GTP-dependent binding of aminoacyl-tRNA to the A-site of ribosomes during protein biosynthesis. The protein is Elongation factor Tu of Corynebacterium efficiens (strain DSM 44549 / YS-314 / AJ 12310 / JCM 11189 / NBRC 100395).